A 252-amino-acid polypeptide reads, in one-letter code: UPF0273 protein MK0039 (252 aa).

The 245-residue stretch at Glu-4–Arg-248 folds into the KaiC domain. Gly-31 to Thr-38 is an ATP binding site.

The protein belongs to the UPF0273 family.

This Methanopyrus kandleri (strain AV19 / DSM 6324 / JCM 9639 / NBRC 100938) protein is UPF0273 protein MK0039.